Here is a 176-residue protein sequence, read N- to C-terminus: Ribosome maturation factor RimM (176 aa).

The 80-residue stretch at 93-172 (KDEFFYFDII…KIQVKNSLDI (80 aa)) folds into the PRC barrel domain.

Belongs to the RimM family. Binds ribosomal protein uS19.

The protein resides in the cytoplasm. In terms of biological role, an accessory protein needed during the final step in the assembly of 30S ribosomal subunit, possibly for assembly of the head region. Essential for efficient processing of 16S rRNA. May be needed both before and after RbfA during the maturation of 16S rRNA. It has affinity for free ribosomal 30S subunits but not for 70S ribosomes. This is Ribosome maturation factor RimM from Campylobacter fetus subsp. fetus (strain 82-40).